The primary structure comprises 310 residues: Ferredoxin--NADP reductase (310 aa).

Residues D26, Q34, Y39, V78, F108, D268, and T308 each contribute to the FAD site.

This sequence belongs to the ferredoxin--NADP reductase type 2 family. As to quaternary structure, homodimer. The cofactor is FAD.

It catalyses the reaction 2 reduced [2Fe-2S]-[ferredoxin] + NADP(+) + H(+) = 2 oxidized [2Fe-2S]-[ferredoxin] + NADPH. This Lactobacillus helveticus (strain DPC 4571) protein is Ferredoxin--NADP reductase.